A 308-amino-acid polypeptide reads, in one-letter code: 4-hydroxy-3-methylbut-2-enyl diphosphate reductase 2 (308 aa).

Cysteine 12 serves as a coordination point for [4Fe-4S] cluster. Histidine 41 and histidine 74 together coordinate (2E)-4-hydroxy-3-methylbut-2-enyl diphosphate. Positions 41 and 74 each coordinate dimethylallyl diphosphate. 2 residues coordinate isopentenyl diphosphate: histidine 41 and histidine 74. [4Fe-4S] cluster is bound at residue cysteine 96. Histidine 124 contributes to the (2E)-4-hydroxy-3-methylbut-2-enyl diphosphate binding site. Residue histidine 124 coordinates dimethylallyl diphosphate. Residue histidine 124 coordinates isopentenyl diphosphate. Glutamate 126 acts as the Proton donor in catalysis. Position 164 (threonine 164) interacts with (2E)-4-hydroxy-3-methylbut-2-enyl diphosphate. [4Fe-4S] cluster is bound at residue cysteine 194. Serine 222, serine 223, asparagine 224, and serine 266 together coordinate (2E)-4-hydroxy-3-methylbut-2-enyl diphosphate. Dimethylallyl diphosphate is bound by residues serine 222, serine 223, asparagine 224, and serine 266. Positions 222, 223, 224, and 266 each coordinate isopentenyl diphosphate.

Belongs to the IspH family. It depends on [4Fe-4S] cluster as a cofactor.

It carries out the reaction isopentenyl diphosphate + 2 oxidized [2Fe-2S]-[ferredoxin] + H2O = (2E)-4-hydroxy-3-methylbut-2-enyl diphosphate + 2 reduced [2Fe-2S]-[ferredoxin] + 2 H(+). It catalyses the reaction dimethylallyl diphosphate + 2 oxidized [2Fe-2S]-[ferredoxin] + H2O = (2E)-4-hydroxy-3-methylbut-2-enyl diphosphate + 2 reduced [2Fe-2S]-[ferredoxin] + 2 H(+). The protein operates within isoprenoid biosynthesis; dimethylallyl diphosphate biosynthesis; dimethylallyl diphosphate from (2E)-4-hydroxy-3-methylbutenyl diphosphate: step 1/1. It participates in isoprenoid biosynthesis; isopentenyl diphosphate biosynthesis via DXP pathway; isopentenyl diphosphate from 1-deoxy-D-xylulose 5-phosphate: step 6/6. Its function is as follows. Catalyzes the conversion of 1-hydroxy-2-methyl-2-(E)-butenyl 4-diphosphate (HMBPP) into a mixture of isopentenyl diphosphate (IPP) and dimethylallyl diphosphate (DMAPP). Acts in the terminal step of the DOXP/MEP pathway for isoprenoid precursor biosynthesis. This Bradyrhizobium diazoefficiens (strain JCM 10833 / BCRC 13528 / IAM 13628 / NBRC 14792 / USDA 110) protein is 4-hydroxy-3-methylbut-2-enyl diphosphate reductase 2.